A 111-amino-acid chain; its full sequence is Large ribosomal subunit protein uL23 (111 aa).

Belongs to the universal ribosomal protein uL23 family. Part of the 50S ribosomal subunit. Contacts protein L29, and trigger factor when it is bound to the ribosome.

Functionally, one of the early assembly proteins it binds 23S rRNA. One of the proteins that surrounds the polypeptide exit tunnel on the outside of the ribosome. Forms the main docking site for trigger factor binding to the ribosome. This is Large ribosomal subunit protein uL23 from Nitrosomonas eutropha (strain DSM 101675 / C91 / Nm57).